Here is a 538-residue protein sequence, read N- to C-terminus: RNA-binding protein Ro60 (538 aa).

Met-1 carries the N-acetylmethionine modification. Phosphoserine is present on residues Ser-4 and Ser-19. Residues 16-369 (VVNSEGGCVW…TFKTVEPTGK (354 aa)) form the TROVE domain. The tract at residues 120-284 (RIPTHLFTFI…EMPLTALLRN (165 aa)) is RNA-binding. The residue at position 224 (Lys-224) is an N6-acetyllysine. The interval 361-538 (FKTVEPTGKR…VIRNFTLDVI (178 aa)) is VWFA-like domain. A divalent metal cation is bound by residues Ser-378, Ser-380, and Thr-445.

Belongs to the Ro 60 kDa family. As to quaternary structure, identified in a IGF2BP1-dependent mRNP granule complex containing untranslated mRNAs. Found in a complex with PUF60 and Y5 RNA. Interacts with RAB11FIP5. As to expression, highest in brain, followed by lung, muscle, kidney and heart. Lower levels are found in testis, liver and spleen.

It is found in the cytoplasm. In terms of biological role, RNA-binding protein that binds to misfolded non-coding RNAs, pre-5S rRNA, and several small cytoplasmic RNA molecules known as Y RNAs. May play roles in cilia formation and/or maintenance. This Mus musculus (Mouse) protein is RNA-binding protein Ro60.